A 231-amino-acid chain; its full sequence is Protein crossbronx homolog (231 aa).

The UBC core domain maps to 14 to 168; it reads LQEYKILTEY…VEECVRLSQA (155 aa).

Belongs to the ubiquitin-conjugating enzyme family. FTS subfamily.

This Culex quinquefasciatus (Southern house mosquito) protein is Protein crossbronx homolog.